Here is a 333-residue protein sequence, read N- to C-terminus: Transcription initiation factor IIB (333 aa).

The TFIIB-type zinc-finger motif lies at glutamate 33–glutamine 64. Residues cysteine 37, cysteine 40, cysteine 56, and cysteine 59 each coordinate Zn(2+). Repeat copies occupy residues glutamine 149 to leucine 232 and leucine 243 to lysine 324.

Belongs to the TFIIB family.

In terms of biological role, stabilizes TBP binding to an archaeal box-A promoter. Also responsible for recruiting RNA polymerase II to the pre-initiation complex (DNA-TBP-TFIIB). This is Transcription initiation factor IIB from Pyrobaculum arsenaticum (strain DSM 13514 / JCM 11321 / PZ6).